Reading from the N-terminus, the 180-residue chain is Thioredoxin 3 (180 aa).

Residues 1–3 (MAL) lie on the Cytoplasmic side of the membrane. Residues 4–24 (ICIGSVCFSLFHIGVIILLII) form a helical; Signal-anchor for type II membrane protein membrane-spanning segment. Over 25 to 180 (NYFSSHIKKI…FQKYCLEKAK (156 aa)) the chain is Lumenal. Residues 29-176 (SHIKKIFPSF…IEKAFQKYCL (148 aa)) enclose the Thioredoxin domain. Residues C99 and C102 each act as nucleophile in the active site. A disulfide bridge links C99 with C102.

The protein belongs to the thioredoxin family. In terms of processing, the disulfide bond between Cys-99 and Cys-102 acts as a redox-active center and is reduced by thioredoxin reductase TRXR.

It is found in the endoplasmic reticulum membrane. In terms of biological role, participates in various redox reactions through the reversible oxidation of its active center dithiol to a disulfide and catalyzes dithiol-disulfide exchange reactions. This Plasmodium falciparum (isolate 3D7) protein is Thioredoxin 3.